A 488-amino-acid chain; its full sequence is Solute carrier family 41 member 3 (488 aa).

Basic and acidic residues-rich tracts occupy residues 1-19 (MEGTEARQRRLEGCGRLKE) and 27-36 (DAGRLPKASE). Residues 1–36 (MEGTEARQRRLEGCGRLKELGPLPSHDAGRLPKASE) are disordered. The next 9 membrane-spanning stretches (helical) occupy residues 63-83 (LIIGFQVVIPFLLAGVGLSWA), 147-167 (LAVVQVQATVVGLLAAVASLM), 189-209 (VITAFLAALALGILMICIVIG), 220-240 (IATPIAASLGDLITLSILALM), 251-271 (WYLTPLVCVGFLALTPLWLFI), 284-304 (YGWFPIILAMIISSFGGLILS), 377-397 (VLLFLVVPGHLIFFYLICLVE), 406-426 (IFILLYLVAGVVQVVILLYLA), and 450-470 (GLGDLLGTSLLALCFFLDWLL).

It belongs to the SLC41A transporter family.

The protein resides in the mitochondrion inner membrane. It carries out the reaction Mg(2+)(in) + 2 Na(+)(out) = Mg(2+)(out) + 2 Na(+)(in). Functionally, na(+)/Mg(2+) ion exchanger that acts as a predominant Mg(2+) efflux system at the mitochondrial inner membrane. This chain is Solute carrier family 41 member 3 (Slc41a3), found in Mus musculus (Mouse).